Consider the following 815-residue polypeptide: Subtilisin-like protease SBT2.5 (815 aa).

An N-terminal signal peptide occupies residues 1–19 (MDIGLRIFVVFVLLVAVTA). Positions 21–124 (VYIVTMEGDP…RSVDKDWKVR (104 aa)) constitute an Inhibitor I9 domain. In terms of domain architecture, Peptidase S8 spans 120–671 (DWKVRRLTTH…SGHVNPSAAL (552 aa)). Active-site charge relay system residues include Asp-160 and His-234. In terms of domain architecture, PA spans 397–501 (TLVSANDVLL…VSKSMDLIDY (105 aa)). 2 N-linked (GlcNAc...) asparagine glycosylation sites follow: Asn-503 and Asn-577. The active-site Charge relay system is Ser-596. N-linked (GlcNAc...) asparagine glycosylation is present at Asn-701.

It belongs to the peptidase S8 family. Expressed in roots, leaves and flowers of mature plants.

This chain is Subtilisin-like protease SBT2.5, found in Arabidopsis thaliana (Mouse-ear cress).